The following is a 192-amino-acid chain: Phosphoheptose isomerase (192 aa).

The SIS domain maps to L37–K192. N52–G54 is a substrate binding site. Positions 61 and 65 each coordinate Zn(2+). Substrate-binding positions include E65, N93–D94, S119–S121, S124, and Q172. Q172 and H180 together coordinate Zn(2+).

This sequence belongs to the SIS family. GmhA subfamily. In terms of assembly, homotetramer. Requires Zn(2+) as cofactor.

It localises to the cytoplasm. It catalyses the reaction 2 D-sedoheptulose 7-phosphate = D-glycero-alpha-D-manno-heptose 7-phosphate + D-glycero-beta-D-manno-heptose 7-phosphate. It participates in carbohydrate biosynthesis; D-glycero-D-manno-heptose 7-phosphate biosynthesis; D-glycero-alpha-D-manno-heptose 7-phosphate and D-glycero-beta-D-manno-heptose 7-phosphate from sedoheptulose 7-phosphate: step 1/1. Catalyzes the isomerization of sedoheptulose 7-phosphate in D-glycero-D-manno-heptose 7-phosphate. In Escherichia coli O139:H28 (strain E24377A / ETEC), this protein is Phosphoheptose isomerase.